Here is a 338-residue protein sequence, read N- to C-terminus: Protein-glutamate methylesterase/protein-glutamine glutaminase 2 (338 aa).

In terms of domain architecture, Response regulatory spans 2-119 (RIGIVNDSAL…SDTKLAAGPL (118 aa)). Asp-53 is subject to 4-aspartylphosphate. Residues 145-330 (PTPTAPRLVA…PLQKIAPRLV (186 aa)) enclose the CheB-type methylesterase domain. Residues Ser-158, His-185, and Asp-278 contribute to the active site.

It belongs to the CheB family. Post-translationally, phosphorylated by CheA. Phosphorylation of the N-terminal regulatory domain activates the methylesterase activity.

The protein resides in the cytoplasm. The catalysed reaction is [protein]-L-glutamate 5-O-methyl ester + H2O = L-glutamyl-[protein] + methanol + H(+). It carries out the reaction L-glutaminyl-[protein] + H2O = L-glutamyl-[protein] + NH4(+). Its function is as follows. Involved in chemotaxis. Part of a chemotaxis signal transduction system that modulates chemotaxis in response to various stimuli. Catalyzes the demethylation of specific methylglutamate residues introduced into the chemoreceptors (methyl-accepting chemotaxis proteins or MCP) by CheR. Also mediates the irreversible deamidation of specific glutamine residues to glutamic acid. In Cupriavidus metallidurans (strain ATCC 43123 / DSM 2839 / NBRC 102507 / CH34) (Ralstonia metallidurans), this protein is Protein-glutamate methylesterase/protein-glutamine glutaminase 2.